The sequence spans 309 residues: Probable lipid kinase YegS-like (309 aa).

Residues 1–134 (MAPSHWRLIL…VDLLRIDADH (134 aa)) form the DAGKc domain. ATP is bound by residues Thr-39, 65-71 (GDGTLSE), and Thr-96. Leu-219, Asp-222, and Leu-224 together coordinate Mg(2+). The active-site Proton acceptor is the Glu-280.

This sequence belongs to the diacylglycerol/lipid kinase family. YegS lipid kinase subfamily. Requires Mg(2+) as cofactor. The cofactor is Ca(2+).

The protein localises to the cytoplasm. In terms of biological role, probably phosphorylates lipids; the in vivo substrate is unknown. The chain is Probable lipid kinase YegS-like from Xanthomonas axonopodis pv. citri (strain 306).